A 344-amino-acid chain; its full sequence is Anthranilate phosphoribosyltransferase (344 aa).

5-phospho-alpha-D-ribose 1-diphosphate contacts are provided by residues glycine 86, 89–90 (GD), threonine 94, 96–99 (NIST), 114–122 (KHGNKSASG), and serine 126. Residue glycine 86 participates in anthranilate binding. Position 98 (serine 98) interacts with Mg(2+). Anthranilate is bound at residue asparagine 117. Arginine 172 contributes to the anthranilate binding site. Aspartate 231 and glutamate 232 together coordinate Mg(2+).

The protein belongs to the anthranilate phosphoribosyltransferase family. As to quaternary structure, homodimer. Requires Mg(2+) as cofactor.

It carries out the reaction N-(5-phospho-beta-D-ribosyl)anthranilate + diphosphate = 5-phospho-alpha-D-ribose 1-diphosphate + anthranilate. Its pathway is amino-acid biosynthesis; L-tryptophan biosynthesis; L-tryptophan from chorismate: step 2/5. Functionally, catalyzes the transfer of the phosphoribosyl group of 5-phosphorylribose-1-pyrophosphate (PRPP) to anthranilate to yield N-(5'-phosphoribosyl)-anthranilate (PRA). The sequence is that of Anthranilate phosphoribosyltransferase from Prochlorococcus marinus (strain MIT 9215).